Here is a 331-residue protein sequence, read N- to C-terminus: 6-phosphogluconolactonase (331 aa).

Belongs to the cycloisomerase 2 family.

The catalysed reaction is 6-phospho-D-glucono-1,5-lactone + H2O = 6-phospho-D-gluconate + H(+). The protein operates within carbohydrate degradation; pentose phosphate pathway; D-ribulose 5-phosphate from D-glucose 6-phosphate (oxidative stage): step 2/3. Its function is as follows. Catalyzes the hydrolysis of 6-phosphogluconolactone to 6-phosphogluconate. This is 6-phosphogluconolactonase from Enterobacter sp. (strain 638).